Consider the following 164-residue polypeptide: UPF0114 protein BCI_0033 (164 aa).

Transmembrane regions (helical) follow at residues 15–35 (LLFP…LKFF), 53–73 (LILI…LVMV), and 136–156 (IMWC…MAYI).

It belongs to the UPF0114 family.

It localises to the cell membrane. This is UPF0114 protein BCI_0033 from Baumannia cicadellinicola subsp. Homalodisca coagulata.